Here is a 100-residue protein sequence, read N- to C-terminus: Urease subunit gamma (100 aa).

Belongs to the urease gamma subunit family. In terms of assembly, heterotrimer of UreA (gamma), UreB (beta) and UreC (alpha) subunits. Three heterotrimers associate to form the active enzyme.

The protein localises to the cytoplasm. It carries out the reaction urea + 2 H2O + H(+) = hydrogencarbonate + 2 NH4(+). Its pathway is nitrogen metabolism; urea degradation; CO(2) and NH(3) from urea (urease route): step 1/1. In Staphylococcus xylosus, this protein is Urease subunit gamma.